We begin with the raw amino-acid sequence, 332 residues long: Aquaporin-7-1 (332 aa).

Residues 1–66 (MSGQHQITEQ…RHAIRMPMAE (66 aa)) lie on the Cytoplasmic side of the membrane. The helical transmembrane segment at 67 to 87 (FFGVALLIIFGAGSACQVVLS) threads the bilayer. Topologically, residues 88–100 (TNPNVASSDRGSF) are extracellular. Residues 101 to 121 (LSINLGWAIGIAMGAWVSGGI) form a helical membrane-spanning segment. Residues 122-144 (SGGHINPAITIAMATYRGFPWRR) lie on the Cytoplasmic side of the membrane. Positions 127 to 129 (NPA) match the NPA 1 motif. The helical transmembrane segment at 145 to 165 (VPSYIFAQVLGGVVGAALVYA) threads the bilayer. The Extracellular segment spans residues 166 to 199 (NYIHAIDIFEGGRHVRTQATASLFATYALPYMTQ). A helical membrane pass occupies residues 200–220 (VSCFFSEFLATAVLSMMVLAL). At 221–230 (TDNRNGAPTN) the chain is on the cytoplasmic side. The chain crosses the membrane as a helical span at residues 231–251 (GLLPFALFVLFIGLGASLGME). The Extracellular segment spans residues 252–283 (TAYALNPARDFGPRLFLAMSGYGKALFNYRSQ). The short motif at 257 to 259 (NPA) is the NPA 2 element. A helical membrane pass occupies residues 284-304 (YWLWAPIIAPVLGAQAGGLLY). Topologically, residues 305–332 (DTFLYDGDNSPIKWRRASSQECQLAEVV) are cytoplasmic.

It belongs to the MIP/aquaporin (TC 1.A.8) family.

It localises to the membrane. The enzyme catalyses H2O(in) = H2O(out). In terms of biological role, water channel required to facilitate the transport of water across membranes. Does not mediate the transport carbon dioxide across the membrane. In Laccaria bicolor (Bicoloured deceiver), this protein is Aquaporin-7-1.